Consider the following 381-residue polypeptide: Putative glutamate--cysteine ligase 2 (381 aa).

This sequence belongs to the glutamate--cysteine ligase type 2 family. YbdK subfamily.

The catalysed reaction is L-cysteine + L-glutamate + ATP = gamma-L-glutamyl-L-cysteine + ADP + phosphate + H(+). Its function is as follows. ATP-dependent carboxylate-amine ligase which exhibits weak glutamate--cysteine ligase activity. In Polaromonas naphthalenivorans (strain CJ2), this protein is Putative glutamate--cysteine ligase 2.